A 329-amino-acid chain; its full sequence is POU domain, class 5, transcription factor 2 (329 aa).

The span at 1 to 14 (MAGRRSSNVFPLSG) shows a compositional bias: polar residues. The disordered stretch occupies residues 1–24 (MAGRRSSNVFPLSGNSGGGLEVDT). Residues 107–181 (DVSAIQKEME…LLKMWLEEVD (75 aa)) form the POU-specific domain. The segment at residues 199-258 (RKRRRASRERRIGSNLEKLFLQCPEPTPQQISYIAGRLRLQKDLVQVWFSNRSQMGSWPT) is a DNA-binding region (homeobox).

It belongs to the POU transcription factor family. Class-5 subfamily. As to expression, in adult brain, expressed in the olfactory bulb, becoming specifically concentrated in the mitral cell layer. Also found in the pyramidal cell layer of the hippocampus, in the granule cell layer of the cerebellum and in the cortex.

It is found in the nucleus. Its function is as follows. Transcription factor that binds preferentially to the octamer motif (5'-ATGTTAAT-3'). May exert a regulatory function in meiotic events that are required for terminal differentiation of male germ cell. The sequence is that of POU domain, class 5, transcription factor 2 (Pou5f2) from Mus musculus (Mouse).